A 267-amino-acid chain; its full sequence is Hydrolase FUB4 (267 aa).

Residues serine 93, aspartate 183, and histidine 243 each act as charge relay system in the active site.

The protein belongs to the AB hydrolase 3 family.

It functions in the pathway mycotoxin biosynthesis. Hydrolase; part of the gene cluster that mediates the biosynthesis of fusaric acid, a mycotoxin with low to moderate toxicity to animals and humans, but with high phytotoxic properties. L-aspartate is suggested as fusaric acid amino acid precursor that is activated and further processed to O-acetyl-L-homoserine by cluster enzymes aspartate kinase FUB3 and homoserine O-acetyltransferase FUB5, as well as enzymes of the primary metabolism. The polyketide synthase (PKS) FUB1 generates the triketide trans-2-hexenal which is presumptively released by the hydrolase FUB4 and linked to the NRPS-bound amino acid precursor by NAD(P)-dependent dehydrogenase FUB6. FUB1, FUB4, and the non-canonical NRPS Fub8 may form an enzyme complex. Further processing of the NRPS-bound intermediate might be carried out by FUB6 and the sulfhydrylase FUB7, enabling a spontaneous electrocyclization to close the carbon backbone of fusaric acid. Dihydrofusaric acid is likely to be released via reduction by the thioester reductase (TR) domain of FUB8 whereupon the final oxidation to fusaric acid may (also) be performed by the FMN-dependent dehydrogenase FUB9. The protein is Hydrolase FUB4 of Gibberella moniliformis (strain M3125 / FGSC 7600) (Maize ear and stalk rot fungus).